Reading from the N-terminus, the 1015-residue chain is Tolloid-like protein 2 (1015 aa).

The signal sequence occupies residues 1–25; it reads MPRATALGALVSLLLLLPLPRGAGG. Disordered stretches follow at residues 24–49 and 88–130; these read GGLG…EQQL and VGAT…TTLL. Residues 26–149 constitute a propeptide that is removed on maturation; the sequence is LGERPDATAD…AKTFSPRVRR (124 aa). A compositionally biased stretch (polar residues) spans 103-113; that stretch reads SESSPDTTAMD. The segment covering 115-125 has biased composition (basic and acidic residues); the sequence is GTKEAGKDGRE. A Peptidase M12A domain is found at 149–349; it reads RATTSRTERI…AQARKLYKCP (201 aa). N171 is a glycosylation site (N-linked (GlcNAc...) asparagine). 4 disulfides stabilise this stretch: C192–C348, C212–C234, C214–C215, and C351–C377. H242 lines the Zn(2+) pocket. E243 is a catalytic residue. 2 residues coordinate Zn(2+): H246 and H252. CUB domains follow at residues 351 to 463 and 464 to 576; these read CGET…YEAT and CGGD…FFKE. N-linked (GlcNAc...) asparagine glycosylation is found at N361 and N392. 12 cysteine pairs are disulfide-bonded: C404-C426, C464-C490, C517-C539, C580-C592, C588-C601, C603-C616, C620-C646, C673-C695, C736-C747, C743-C756, C758-C771, and C776-C802. In terms of domain architecture, EGF-like 1; calcium-binding spans 576–617; the sequence is EVDECSWPDHGGCEHRCVNTLGSYKCACDPGYELAADKKMCE. The region spanning 620-732 is the CUB 3 domain; it reads CGGFITKLNG…RGFRAHFFSD (113 aa). N628 is a glycosylation site (N-linked (GlcNAc...) asparagine). An EGF-like 2; calcium-binding domain is found at 732–772; that stretch reads DKDECAKDNGGCQHECVNTFGSYLCRCRNGYWLHENGHDCK. 2 consecutive CUB domains span residues 776–888 and 889–1005; these read CAHK…HSTE and CGGR…YTST. An N-linked (GlcNAc...) asparagine glycan is attached at N805. Cystine bridges form between C829–C851, C889–C919, and C946–C968. Residues R963 and R966 each carry the omega-N-methylarginine modification.

It depends on Zn(2+) as a cofactor.

The protein resides in the secreted. In terms of biological role, protease which specifically processes pro-lysyl oxidase. Required for the embryonic development. Predominant protease, which in the development, influences dorsal-ventral patterning and skeletogenesis. This is Tolloid-like protein 2 (TLL2) from Homo sapiens (Human).